The chain runs to 728 residues: Polyribonucleotide nucleotidyltransferase (728 aa).

2 residues coordinate Mg(2+): aspartate 503 and aspartate 509. In terms of domain architecture, KH spans 570 to 629; it reads PRLTTIKIPSDCIGMVIGKGGETIRGITEETGAEINIADDGTVTIACTTKEGTDAALATI. The region spanning 639–713 is the S1 motif domain; sequence GNIYVGKVRD…GKTKFALSIK (75 aa).

This sequence belongs to the polyribonucleotide nucleotidyltransferase family. Mg(2+) serves as cofactor.

The protein localises to the cytoplasm. It carries out the reaction RNA(n+1) + phosphate = RNA(n) + a ribonucleoside 5'-diphosphate. Involved in mRNA degradation. Catalyzes the phosphorolysis of single-stranded polyribonucleotides processively in the 3'- to 5'-direction. The protein is Polyribonucleotide nucleotidyltransferase of Chlorobium chlorochromatii (strain CaD3).